Here is a 645-residue protein sequence, read N- to C-terminus: DNA ligase (645 aa).

NAD(+) is bound by residues 30 to 34 (DDEYD), 79 to 80 (SM), and E106. K108 acts as the N6-AMP-lysine intermediate in catalysis. NAD(+)-binding residues include R129, E163, and K302. The Zn(2+) site is built by C396, C399, C412, and C417. Positions 570-645 (LKTNIFSGKT…IDESEYESLK (76 aa)) constitute a BRCT domain.

It belongs to the NAD-dependent DNA ligase family. LigA subfamily. Mg(2+) is required as a cofactor. Requires Mn(2+) as cofactor.

It catalyses the reaction NAD(+) + (deoxyribonucleotide)n-3'-hydroxyl + 5'-phospho-(deoxyribonucleotide)m = (deoxyribonucleotide)n+m + AMP + beta-nicotinamide D-nucleotide.. DNA ligase that catalyzes the formation of phosphodiester linkages between 5'-phosphoryl and 3'-hydroxyl groups in double-stranded DNA using NAD as a coenzyme and as the energy source for the reaction. It is essential for DNA replication and repair of damaged DNA. This chain is DNA ligase, found in Campylobacter fetus subsp. fetus (strain 82-40).